The sequence spans 193 residues: CASP-like protein 1D1 (193 aa).

Residues 1–24 (MGYETKSTLDTERSTAPGTGTTTK) form a disordered region. At 1-30 (MGYETKSTLDTERSTAPGTGTTTKSCSMTQ) the chain is on the cytoplasmic side. A compositionally biased stretch (polar residues) spans 14 to 24 (STAPGTGTTTK). The helical transmembrane segment at 31-51 (VVLRFVLFAATLTSIVVMVTS) threads the bilayer. Over 52-76 (KQTKNIFLPGTPIRIPAAEFTNSPA) the chain is Extracellular. The chain crosses the membrane as a helical span at residues 77–97 (LIYFVVALSVACFYSIVSTFV). Residues 98–108 (TVSAFKKHSCS) lie on the Cytoplasmic side of the membrane. A helical membrane pass occupies residues 109 to 129 (AVLLLNLAIMDAVMVGIVASA). The Extracellular segment spans residues 130–162 (TGAGGGVAYLGLKGNKEVRWGKICHIYDKFCRH). The chain crosses the membrane as a helical span at residues 163–183 (VGGAIAVSLFASVVLLLLSII). Residues 184–193 (SVLSLYKKIR) lie on the Cytoplasmic side of the membrane.

Belongs to the Casparian strip membrane proteins (CASP) family. As to quaternary structure, homodimer and heterodimers.

It localises to the cell membrane. This is CASP-like protein 1D1 from Arabidopsis thaliana (Mouse-ear cress).